The following is a 392-amino-acid chain: Succinate--CoA ligase [ADP-forming] subunit beta (392 aa).

The region spanning 9–236 (KELFAAHGVP…PSAADPLEAK (228 aa)) is the ATP-grasp domain. Residues lysine 45, 52 to 54 (GRG), valine 94, and glutamate 99 each bind ATP. Residues asparagine 191 and aspartate 205 each contribute to the Mg(2+) site. Residues asparagine 256 and 318 to 320 (GIT) contribute to the substrate site.

The protein belongs to the succinate/malate CoA ligase beta subunit family. In terms of assembly, heterotetramer of two alpha and two beta subunits. Requires Mg(2+) as cofactor.

The catalysed reaction is succinate + ATP + CoA = succinyl-CoA + ADP + phosphate. The enzyme catalyses GTP + succinate + CoA = succinyl-CoA + GDP + phosphate. It functions in the pathway carbohydrate metabolism; tricarboxylic acid cycle; succinate from succinyl-CoA (ligase route): step 1/1. Succinyl-CoA synthetase functions in the citric acid cycle (TCA), coupling the hydrolysis of succinyl-CoA to the synthesis of either ATP or GTP and thus represents the only step of substrate-level phosphorylation in the TCA. The beta subunit provides nucleotide specificity of the enzyme and binds the substrate succinate, while the binding sites for coenzyme A and phosphate are found in the alpha subunit. The chain is Succinate--CoA ligase [ADP-forming] subunit beta from Acidothermus cellulolyticus (strain ATCC 43068 / DSM 8971 / 11B).